A 194-amino-acid chain; its full sequence is Holliday junction branch migration complex subunit RuvA (194 aa).

The domain I stretch occupies residues 1–64; it reads MISRLTGKLV…EDAHLLFGFA (64 aa). The tract at residues 65–143 is domain II; that stretch reads TAEERKTFRQ…AHTVTDGLFA (79 aa). The flexible linker stretch occupies residues 144–147; that stretch reads AAPA. The tract at residues 147–194 is domain III; sequence AADETEDIVSTLLALGYSEREAKAAVKGVPEGTDVGEGVRLALKNLLK.

It belongs to the RuvA family. In terms of assembly, homotetramer. Forms an RuvA(8)-RuvB(12)-Holliday junction (HJ) complex. HJ DNA is sandwiched between 2 RuvA tetramers; dsDNA enters through RuvA and exits via RuvB. An RuvB hexamer assembles on each DNA strand where it exits the tetramer. Each RuvB hexamer is contacted by two RuvA subunits (via domain III) on 2 adjacent RuvB subunits; this complex drives branch migration. In the full resolvosome a probable DNA-RuvA(4)-RuvB(12)-RuvC(2) complex forms which resolves the HJ.

It is found in the cytoplasm. The RuvA-RuvB-RuvC complex processes Holliday junction (HJ) DNA during genetic recombination and DNA repair, while the RuvA-RuvB complex plays an important role in the rescue of blocked DNA replication forks via replication fork reversal (RFR). RuvA specifically binds to HJ cruciform DNA, conferring on it an open structure. The RuvB hexamer acts as an ATP-dependent pump, pulling dsDNA into and through the RuvAB complex. HJ branch migration allows RuvC to scan DNA until it finds its consensus sequence, where it cleaves and resolves the cruciform DNA. This Neisseria meningitidis serogroup C (strain 053442) protein is Holliday junction branch migration complex subunit RuvA.